A 64-amino-acid chain; its full sequence is DNA gyrase inhibitor YacG (64 aa).

4 residues coordinate Zn(2+): Cys9, Cys12, Cys28, and Cys32. Residues 42 to 64 (DEENAIPGAPDMSDSDGWSEEQY) form a disordered region. Acidic residues predominate over residues 54-64 (SDSDGWSEEQY).

Belongs to the DNA gyrase inhibitor YacG family. In terms of assembly, interacts with GyrB. Requires Zn(2+) as cofactor.

Functionally, inhibits all the catalytic activities of DNA gyrase by preventing its interaction with DNA. Acts by binding directly to the C-terminal domain of GyrB, which probably disrupts DNA binding by the gyrase. This Vibrio vulnificus (strain YJ016) protein is DNA gyrase inhibitor YacG.